A 336-amino-acid polypeptide reads, in one-letter code: Protein-glutamate methylesterase/protein-glutamine glutaminase 2 (336 aa).

A Response regulatory domain is found at 2-119 (KIAIVNDMPM…PNPKEAAAPL (118 aa)). D53 bears the 4-aspartylphosphate mark. Positions 147-336 (PSRRDRLVAI…APRLIEVFTQ (190 aa)) constitute a CheB-type methylesterase domain. Active-site residues include S159, H186, and D279.

This sequence belongs to the CheB family. In terms of processing, phosphorylated by CheA. Phosphorylation of the N-terminal regulatory domain activates the methylesterase activity.

Its subcellular location is the cytoplasm. The catalysed reaction is [protein]-L-glutamate 5-O-methyl ester + H2O = L-glutamyl-[protein] + methanol + H(+). It carries out the reaction L-glutaminyl-[protein] + H2O = L-glutamyl-[protein] + NH4(+). Functionally, involved in chemotaxis. Part of a chemotaxis signal transduction system that modulates chemotaxis in response to various stimuli. Catalyzes the demethylation of specific methylglutamate residues introduced into the chemoreceptors (methyl-accepting chemotaxis proteins or MCP) by CheR. Also mediates the irreversible deamidation of specific glutamine residues to glutamic acid. This chain is Protein-glutamate methylesterase/protein-glutamine glutaminase 2, found in Pseudomonas syringae pv. syringae (strain B728a).